The primary structure comprises 91 residues: DNA-directed RNA polymerase subunit omega (91 aa).

The protein belongs to the RNA polymerase subunit omega family. As to quaternary structure, the RNAP catalytic core consists of 2 alpha, 1 beta, 1 beta' and 1 omega subunit. When a sigma factor is associated with the core the holoenzyme is formed, which can initiate transcription.

The enzyme catalyses RNA(n) + a ribonucleoside 5'-triphosphate = RNA(n+1) + diphosphate. Functionally, promotes RNA polymerase assembly. Latches the N- and C-terminal regions of the beta' subunit thereby facilitating its interaction with the beta and alpha subunits. This Serratia proteamaculans (strain 568) protein is DNA-directed RNA polymerase subunit omega.